A 454-amino-acid polypeptide reads, in one-letter code: Cytochrome b-c1 complex subunit 2, mitochondrial (454 aa).

The N-terminal 35 residues, 1 to 35 (MISRSALSRGSQLALRRPAAAKTAQRGFAAAAASP), are a transit peptide targeting the mitochondrion.

Belongs to the peptidase M16 family. UQCRC2/QCR2 subfamily. As to quaternary structure, component of the ubiquinol-cytochrome c oxidoreductase (cytochrome b-c1 complex, complex III, CIII), a multisubunit enzyme composed of 10 subunits. The complex is composed of 3 respiratory subunits cytochrome b (cob), cytochrome c1 (cyt-1) and Rieske protein (fes-1), 2 core protein subunits pep and ucr-1, and 5 low-molecular weight protein subunits qcr6, qcr7, qcr8, qcr9 and probably NCU16844/qcr10. The complex exists as an obligatory dimer and forms supercomplexes (SCs) in the inner mitochondrial membrane with NADH-ubiquinone oxidoreductase (complex I, CI) and cytochrome c oxidase (complex IV, CIV), resulting in different assemblies (supercomplexes SCI(1)III(2), SCIII(2)IV(1) and SCIII(2)IV(2) as well as higher order I(x)III(y)IV(z) megacomplexes).

It is found in the mitochondrion inner membrane. Component of the ubiquinol-cytochrome c oxidoreductase, a multisubunit transmembrane complex that is part of the mitochondrial electron transport chain which drives oxidative phosphorylation. The respiratory chain contains 3 multisubunit complexes succinate dehydrogenase (complex II, CII), ubiquinol-cytochrome c oxidoreductase (cytochrome b-c1 complex, complex III, CIII) and cytochrome c oxidase (complex IV, CIV), that cooperate to transfer electrons derived from NADH and succinate to molecular oxygen, creating an electrochemical gradient over the inner membrane that drives transmembrane transport and the ATP synthase. The cytochrome b-c1 complex catalyzes electron transfer from ubiquinol to cytochrome c, linking this redox reaction to translocation of protons across the mitochondrial inner membrane, with protons being carried across the membrane as hydrogens on the quinol. In the process called Q cycle, 2 protons are consumed from the matrix, 4 protons are released into the intermembrane space and 2 electrons are passed to cytochrome c. The sequence is that of Cytochrome b-c1 complex subunit 2, mitochondrial (ucr-1) from Neurospora crassa (strain ATCC 24698 / 74-OR23-1A / CBS 708.71 / DSM 1257 / FGSC 987).